We begin with the raw amino-acid sequence, 464 residues long: L-cysteine desulfhydrase-like protein lolT2 (464 aa).

Position 227 is an N6-(pyridoxal phosphate)lysine (lysine 227).

It belongs to the class-V pyridoxal-phosphate-dependent aminotransferase family. It depends on pyridoxal 5'-phosphate as a cofactor.

Its pathway is alkaloid biosynthesis. In terms of biological role, L-cysteine desulfhydrase-like protein; part of the gene cluster that mediates the biosynthesis of loline alkaloids, potent insecticidal agents composed of a pyrrolizidine ring system and an uncommon ether bridge linking carbons 2 and 7. Lolines are structurally differentiated by the various modifications of the L-amino group and include norloline, loline, N-methylloline, N-acetylloline, N-acetylnorloline, and N-formylloline. The first committed step is the condensation of O-acetyl-L-homoserine (derived from L-aspartic acid) and L-proline, probably catalyzed by the gamma-type pyridoxal 5'-phosphate(PLP)-dependent enzyme lolC, to give the diamino diacid, NACPP. Ensuing cyclization, decarboxylation, and acetylation steps yield 1-exo-acetamidopyrrolizidine (AcAP). LolO is required for installation of the ether bridge upon the pathway intermediate, 1-exo-acetamidopyrrolizidine (AcAP). In sequential 2-oxoglutarate- and O(2)-consuming steps, lolO removes hydrogens from C2 and C7 of AcAP to form both carbon-oxygen bonds in N-acetylnorloline (NANL), the precursor to all other lolines. The enzymes lolD, lolE, lolF and lolT have also been proposed to be involved in the ether-bridge installation. Further processing of the exocyclic moiety of NANL by fungal N-acetamidase (LolN), methyltransferase (LolM), and cytochrome P450 (LolP) enzymes, with occasional involvement of a plant acetyltransferase, generates the other known lolines. LolN transforms NANL to norlonine which is monomethylated and dimethylated to respectively lonine and N-methyllonine (NML) by lolM. LolP catalyzes hydroxylation of the methyl group in N-methylloline (NML) and further oxygenation to N-formylloline (NFL). A plant acetyltransferase is responsible for the acetylation of loline to form N-acetylloline (NAL). LolA might interact with aspartate kinase to prevent feedback inhibition of its activity by these end products and thereby promote production of L-homoserine from L-aspartate. This Epichloe uncinata (Endophyte fungus) protein is L-cysteine desulfhydrase-like protein lolT2.